We begin with the raw amino-acid sequence, 402 residues long: Phosphoglycerate kinase (402 aa).

Substrate-binding positions include 29-31 (DFN), Arg45, 69-72 (HLGR), Arg125, and Arg158. ATP is bound by residues Lys209, Glu331, and 357 to 360 (GGDT).

It belongs to the phosphoglycerate kinase family.

Its subcellular location is the cytoplasm. The catalysed reaction is (2R)-3-phosphoglycerate + ATP = (2R)-3-phospho-glyceroyl phosphate + ADP. It functions in the pathway carbohydrate degradation; glycolysis; pyruvate from D-glyceraldehyde 3-phosphate: step 2/5. The protein is Phosphoglycerate kinase (pgk) of Helicobacter pylori (strain ATCC 700392 / 26695) (Campylobacter pylori).